Consider the following 76-residue polypeptide: uncharacterized protein (76 aa).

The required for interaction with PPP3CA stretch occupies residues 36-41 (PDIIIT). A phosphothreonine mark is found at threonine 44 and threonine 46.

Interacts (via PxIxIT motif, when phosphorylated on Thr-44) with PPP3CA. In terms of tissue distribution, not expressed in pancreatic duct cells (at protein level). Abundantly expressed in the pancreas and weakly expressed in the thyroid. As to expression, not expressed in pancreatic duct cells (at protein level). Abundantly expressed in the lymph node and weakly expressed in the stomach, trachea and bone marrow.

This is an uncharacterized protein from Homo sapiens (Human).